The following is a 474-amino-acid chain: Fumarate hydratase class II (474 aa).

Residues 104-106 (SGT), 128-131 (HPND), 138-140 (SSN), and Thr186 contribute to the substrate site. The active-site Proton donor/acceptor is the His187. Residue Ser318 is part of the active site. Substrate-binding positions include Ser319 and 324–326 (KVN).

This sequence belongs to the class-II fumarase/aspartase family. Fumarase subfamily. Homotetramer.

The protein localises to the cytoplasm. The catalysed reaction is (S)-malate = fumarate + H2O. Its pathway is carbohydrate metabolism; tricarboxylic acid cycle; (S)-malate from fumarate: step 1/1. In terms of biological role, involved in the TCA cycle. Catalyzes the stereospecific interconversion of fumarate to L-malate. The sequence is that of Fumarate hydratase class II from Mycobacterium bovis (strain ATCC BAA-935 / AF2122/97).